Reading from the N-terminus, the 201-residue chain is MSSKLRLGVAGPVGSGKTALVEALCRRLRDDLQLAVVTNDIYTQEDAQFLTRAGALDPERIRGVETGGCPHTAIREDCSINRAAVAELEAQFPELDLVLVESGGDNLAASFSPELVDLCIYVIDVAAGDKIPRKGGPGITRSDLLVINKIDLAPQVGADLALMEQDTRRMRGDRPWCFTNLHSGEGLEQVLAFLSQQLPNS.

11–18 provides a ligand contact to GTP; the sequence is GPVGSGKT.

This sequence belongs to the SIMIBI class G3E GTPase family. UreG subfamily. Homodimer. UreD, UreF and UreG form a complex that acts as a GTP-hydrolysis-dependent molecular chaperone, activating the urease apoprotein by helping to assemble the nickel containing metallocenter of UreC. The UreE protein probably delivers the nickel.

It is found in the cytoplasm. In terms of biological role, facilitates the functional incorporation of the urease nickel metallocenter. This process requires GTP hydrolysis, probably effectuated by UreG. The protein is Urease accessory protein UreG of Synechococcus sp. (strain CC9605).